Reading from the N-terminus, the 322-residue chain is Mas-related G-protein coupled receptor member X1 (322 aa).

Residues 1–31 (MDPTISTLDTELTPINGTEETLCYKQTLSLT) are Extracellular-facing. An N-linked (GlcNAc...) asparagine glycan is attached at asparagine 16. The chain crosses the membrane as a helical span at residues 32–52 (VLTCIVSLVGLTGNAVVLWLL). At 53-67 (GCRMRRNAFSIYILN) the chain is on the cytoplasmic side. A helical membrane pass occupies residues 68–88 (LAAADFLFLSGRLIYSLLSFI). The Extracellular portion of the chain corresponds to 89-96 (SIPHTISK). Residues 97–117 (ILYPVMMFSYFAGLSFLSAVS) traverse the membrane as a helical segment. Residues 118–144 (TERCLSVLWPIWYRCHRPTHLSAVVCV) are Cytoplasmic-facing. The chain crosses the membrane as a helical span at residues 145–165 (LLWALSLLRSILEWMLCGFLF). Over 166-177 (SGADSAWCQTSD) the chain is Extracellular. A helical transmembrane segment spans residues 178–198 (FITVAWLIFLCVVLCGSSLVL). Over 199 to 221 (LIRILCGSRKIPLTRLYVTILLT) the chain is Cytoplasmic. The helical transmembrane segment at 222-242 (VLVFLLCGLPFGIQFFLFLWI) threads the bilayer. Over 243 to 254 (HVDREVLFCHVH) the chain is Extracellular. A helical membrane pass occupies residues 255 to 275 (LVSIFLSALNSSANPIIYFFV). Residues 276–322 (GSFRQRQNRQNLKLVLQRALQDASEVDEGGGQLPEEILELSGSRLEQ) are Cytoplasmic-facing.

The protein belongs to the G-protein coupled receptor 1 family. Mas subfamily. Uniquely localized in a subset of small dorsal root and trigeminal sensory neurons.

Its subcellular location is the cell membrane. Orphan receptor. Probably involved in the function of nociceptive neurons. May regulate nociceptor function and/or development, including the sensation or modulation of pain. Potently activated by enkephalins including BAM22 (bovine adrenal medulla peptide 22) and BAM (8-22). BAM22 is the most potent compound and evoked a large and dose-dependent release of intracellular calcium in stably transfected cells. G(alpha)q proteins are involved in the calcium-signaling pathway. Activated by the antimalarial drug, chloroquine. May mediate chloroquine-induced itch, in a histamine-independent manner. The protein is Mas-related G-protein coupled receptor member X1 (MRGPRX1) of Homo sapiens (Human).